The sequence spans 1857 residues: Fatty acid synthase subunit alpha (1857 aa).

Residues 96 to 132 (EEEPEATEPAPSATPAAPAAAPAAGAPPPPPSAGPAA) form a disordered region. Positions 102–119 (TEPAPSATPAAPAAAPAA) are enriched in low complexity. The region spanning 139 to 214 (VTAVDILRTL…ASMQATFNGQ (76 aa)) is the Carrier domain. Ser174 is subject to O-(pantetheine 4'-phosphoryl)serine. Residues 577-604 (QIIPQENGHSKKGGRSAAKRNTPTRPGK) are disordered. Positions 648–845 (KNVLMTGAGA…GAVIGWTRGT (198 aa)) are beta-ketoacyl reductase. The region spanning 1092–1633 (LQEIVIQEDL…QKGAQVIGIH (542 aa)) is the Ketosynthase family 3 (KS3) domain. Residues Cys1275, His1518, and His1559 each act as for beta-ketoacyl synthase activity in the active site. 3 residues coordinate Mg(2+): Asp1743, Val1744, and Glu1745. Acetyl-CoA is bound by residues 1743-1745 (DVE), Tyr1769, Ser1779, 1788-1798 (EAVFKSLGVSS), 1812-1815 (VDAN), and 1842-1844 (ISH). Positions 1843 and 1844 each coordinate Mg(2+).

It belongs to the thiolase-like superfamily. Fungal fatty acid synthetase subunit alpha family. [Alpha(6)beta(6)] hexamers of two multifunctional subunits (alpha and beta).

It catalyses the reaction acetyl-CoA + n malonyl-CoA + 2n NADPH + 4n H(+) = a long-chain-acyl-CoA + n CoA + n CO2 + 2n NADP(+).. It carries out the reaction a fatty acyl-[ACP] + malonyl-[ACP] + H(+) = a 3-oxoacyl-[ACP] + holo-[ACP] + CO2. The catalysed reaction is a (3R)-hydroxyacyl-[ACP] + NADP(+) = a 3-oxoacyl-[ACP] + NADPH + H(+). In terms of biological role, fatty acid synthetase catalyzes the formation of long-chain fatty acids from acetyl-CoA, malonyl-CoA and NADPH. The alpha subunit contains domains for: acyl carrier protein, 3-oxoacyl-[acyl-carrier-protein] reductase, and 3-oxoacyl-[acyl-carrier-protein] synthase. This chain is Fatty acid synthase subunit alpha (FAS2), found in Penicillium patulum (Penicillium griseofulvum).